Here is a 71-residue protein sequence, read N- to C-terminus: DNA-directed RNA polymerase subunit epsilon (71 aa).

This sequence belongs to the RNA polymerase subunit epsilon family. As to quaternary structure, RNAP is composed of a core of 2 alpha, a beta and a beta' subunit. The core is associated with a delta subunit, and at least one of epsilon or omega. When a sigma factor is associated with the core the holoenzyme is formed, which can initiate transcription.

It carries out the reaction RNA(n) + a ribonucleoside 5'-triphosphate = RNA(n+1) + diphosphate. Its function is as follows. A non-essential component of RNA polymerase (RNAP). This chain is DNA-directed RNA polymerase subunit epsilon, found in Staphylococcus carnosus (strain TM300).